The following is a 264-amino-acid chain: Phycocyanobilin:ferredoxin oxidoreductase (264 aa).

This sequence belongs to the HY2 family.

It carries out the reaction (2R,3Z)-phycocyanobilin + 4 oxidized [2Fe-2S]-[ferredoxin] = biliverdin IXalpha + 4 reduced [2Fe-2S]-[ferredoxin] + 4 H(+). Catalyzes the four-electron reduction of biliverdin IX-alpha (2-electron reduction at both the A and D rings); the reaction proceeds via an isolatable 2-electron intermediate, 181,182-dihydrobiliverdin. This is Phycocyanobilin:ferredoxin oxidoreductase (pcyA) from Prochlorococcus marinus (strain MIT 9313).